Consider the following 463-residue polypeptide: Phosphomethylpyrimidine synthase (463 aa).

Substrate contacts are provided by residues asparagine 80, methionine 109, tyrosine 138, histidine 173, 193-195 (SRG), 234-237 (DGLR), and glutamate 273. Histidine 277 lines the Zn(2+) pocket. Tyrosine 300 contributes to the substrate binding site. Histidine 341 lines the Zn(2+) pocket. Residues cysteine 421, cysteine 424, and cysteine 429 each coordinate [4Fe-4S] cluster.

It belongs to the ThiC family. In terms of assembly, homodimer. [4Fe-4S] cluster is required as a cofactor.

It carries out the reaction 5-amino-1-(5-phospho-beta-D-ribosyl)imidazole + S-adenosyl-L-methionine = 4-amino-2-methyl-5-(phosphooxymethyl)pyrimidine + CO + 5'-deoxyadenosine + formate + L-methionine + 3 H(+). Its pathway is cofactor biosynthesis; thiamine diphosphate biosynthesis. Catalyzes the synthesis of the hydroxymethylpyrimidine phosphate (HMP-P) moiety of thiamine from aminoimidazole ribotide (AIR) in a radical S-adenosyl-L-methionine (SAM)-dependent reaction. The chain is Phosphomethylpyrimidine synthase from Anaeromyxobacter dehalogenans (strain 2CP-1 / ATCC BAA-258).